Here is an 878-residue protein sequence, read N- to C-terminus: Leucine--tRNA ligase (878 aa).

A 'HIGH' region motif is present at residues P56–H66. Residues K630–S634 carry the 'KMSKS' region motif. K633 contacts ATP.

The protein belongs to the class-I aminoacyl-tRNA synthetase family.

The protein resides in the cytoplasm. The enzyme catalyses tRNA(Leu) + L-leucine + ATP = L-leucyl-tRNA(Leu) + AMP + diphosphate. The protein is Leucine--tRNA ligase of Prochlorococcus marinus (strain MIT 9313).